Consider the following 284-residue polypeptide: Bifunctional protein FolD (284 aa).

NADP(+) contacts are provided by residues 166-168 (GAS) and Ile232.

It belongs to the tetrahydrofolate dehydrogenase/cyclohydrolase family. Homodimer.

The enzyme catalyses (6R)-5,10-methylene-5,6,7,8-tetrahydrofolate + NADP(+) = (6R)-5,10-methenyltetrahydrofolate + NADPH. The catalysed reaction is (6R)-5,10-methenyltetrahydrofolate + H2O = (6R)-10-formyltetrahydrofolate + H(+). The protein operates within one-carbon metabolism; tetrahydrofolate interconversion. Its function is as follows. Catalyzes the oxidation of 5,10-methylenetetrahydrofolate to 5,10-methenyltetrahydrofolate and then the hydrolysis of 5,10-methenyltetrahydrofolate to 10-formyltetrahydrofolate. This is Bifunctional protein FolD from Pseudomonas entomophila (strain L48).